The sequence spans 310 residues: Protein FAM153A (310 aa).

4 disordered regions span residues 39–58 (LGVPQCERDEGSLGKPLCPP), 108–136 (QTNGDLEDLEEHGPGQTVSEEATEVHTME), 156–184 (SYNGEEEDPEEVKTSLGVPQRGDLEDLEE), and 250–297 (TITG…KKSR). Residues 259–268 (SASPSSAPAE) are compositionally biased toward low complexity. The segment covering 270-282 (ATEKTKVEEEVKT) has biased composition (basic and acidic residues). Residues 283–297 (RKPKKKTRKPSKKSR) are compositionally biased toward basic residues.

Belongs to the FAM153 family.

This Homo sapiens (Human) protein is Protein FAM153A (FAM153A).